A 97-amino-acid polypeptide reads, in one-letter code: U-reduvitoxin-Pr10a (97 aa).

The N-terminal stretch at 1-18 (MKTALFLVFALAFIAVEG) is a signal peptide. Pacifastin domains are found at residues 22–59 (KACS…CPPR) and 62–97 (KQSC…RLCW). Disulfide bonds link Cys-24–Cys-42, Cys-37–Cys-56, and Cys-40–Cys-51. The interval 57–59 (PPR) is pro-Pro-Arg motif necessary for proteolytic processing. 3 disulfides stabilise this stretch: Cys-65-Cys-82, Cys-77-Cys-96, and Cys-80-Cys-91.

The protein belongs to the protease inhibitor I19 family. As to expression, expressed by the venom gland.

The protein resides in the secreted. In terms of biological role, inhibits trypsin activity and prophenoloxidase (PPO) activation, an enzyme essential for both clotting and insect innate immune responses. It does not inhibit activity of chymotrypsin and protease K, and has no effect on phenoloxidase (PO) activity. The protein is U-reduvitoxin-Pr10a of Platymeris rhadamanthus (Red spot assassin bug).